The primary structure comprises 295 residues: ATP-dependent (S)-NAD(P)H-hydrate dehydratase (295 aa).

The YjeF C-terminal domain maps to 9-289 (LLERARNLVP…DQIHQVFDDL (281 aa)). (6S)-NADPHX is bound by residues Gly109 and 162-168 (NAIEFCR). ATP-binding positions include 193 to 197 (KGLND) and 214 to 223 (GSGRRCGGQG). (6S)-NADPHX is bound at residue Asp224.

It belongs to the NnrD/CARKD family. The cofactor is Mg(2+).

It catalyses the reaction (6S)-NADHX + ATP = ADP + phosphate + NADH + H(+). It carries out the reaction (6S)-NADPHX + ATP = ADP + phosphate + NADPH + H(+). Functionally, catalyzes the dehydration of the S-form of NAD(P)HX at the expense of ATP, which is converted to ADP. Together with NAD(P)HX epimerase, which catalyzes the epimerization of the S- and R-forms, the enzyme allows the repair of both epimers of NAD(P)HX, a damaged form of NAD(P)H that is a result of enzymatic or heat-dependent hydration. The sequence is that of ATP-dependent (S)-NAD(P)H-hydrate dehydratase from Anopheles darlingi (Mosquito).